A 246-amino-acid polypeptide reads, in one-letter code: Trypsin V-B (246 aa).

Positions 1 to 15 are cleaved as a signal peptide; that stretch reads MKICIFFTLLGTVAA. A propeptide spans 16–24 (activation peptide); the sequence is FPTEDNDDR. Residues 25–244 enclose the Peptidase S1 domain; that stretch reads IVGGYTCQEH…YLNWIQQTVA (220 aa). 6 disulfide bridges follow: cysteine 31/cysteine 160, cysteine 49/cysteine 65, cysteine 133/cysteine 233, cysteine 140/cysteine 206, cysteine 171/cysteine 185, and cysteine 196/cysteine 220. The Charge relay system role is filled by histidine 64. Residues glutamate 76, asparagine 78, and glutamate 86 each contribute to the Ca(2+) site. Residue aspartate 108 is the Charge relay system of the active site. Serine 200 functions as the Charge relay system in the catalytic mechanism.

This sequence belongs to the peptidase S1 family. Ca(2+) is required as a cofactor.

The protein localises to the secreted. Its subcellular location is the extracellular space. It carries out the reaction Preferential cleavage: Arg-|-Xaa, Lys-|-Xaa.. The polypeptide is Trypsin V-B (Rattus norvegicus (Rat)).